The chain runs to 105 residues: Met repressor (105 aa).

The protein belongs to the MetJ family. In terms of assembly, homodimer.

Its subcellular location is the cytoplasm. In terms of biological role, this regulatory protein, when combined with SAM (S-adenosylmethionine) represses the expression of the methionine regulon and of enzymes involved in SAM synthesis. The sequence is that of Met repressor from Pasteurella multocida (strain Pm70).